The chain runs to 342 residues: tRNA N6-adenosine threonylcarbamoyltransferase (342 aa).

Positions 112 and 116 each coordinate Fe cation. Substrate contacts are provided by residues 134–138, Asp167, Gly180, and Asn280; that span reads LASGG. Asp308 provides a ligand contact to Fe cation.

This sequence belongs to the KAE1 / TsaD family. It depends on Fe(2+) as a cofactor.

The protein resides in the cytoplasm. The enzyme catalyses L-threonylcarbamoyladenylate + adenosine(37) in tRNA = N(6)-L-threonylcarbamoyladenosine(37) in tRNA + AMP + H(+). In terms of biological role, required for the formation of a threonylcarbamoyl group on adenosine at position 37 (t(6)A37) in tRNAs that read codons beginning with adenine. Is involved in the transfer of the threonylcarbamoyl moiety of threonylcarbamoyl-AMP (TC-AMP) to the N6 group of A37, together with TsaE and TsaB. TsaD likely plays a direct catalytic role in this reaction. In Rickettsia canadensis (strain McKiel), this protein is tRNA N6-adenosine threonylcarbamoyltransferase.